The chain runs to 544 residues: Phenylalanine--tRNA ligase beta subunit (544 aa).

The B5 domain occupies L268–P343. Positions 321, 327, 330, and 331 each coordinate Mg(2+).

Belongs to the phenylalanyl-tRNA synthetase beta subunit family. Type 2 subfamily. Tetramer of two alpha and two beta subunits. Mg(2+) is required as a cofactor.

The protein localises to the cytoplasm. It carries out the reaction tRNA(Phe) + L-phenylalanine + ATP = L-phenylalanyl-tRNA(Phe) + AMP + diphosphate + H(+). This Saccharolobus solfataricus (strain ATCC 35092 / DSM 1617 / JCM 11322 / P2) (Sulfolobus solfataricus) protein is Phenylalanine--tRNA ligase beta subunit.